The chain runs to 264 residues: Ion-translocating oxidoreductase complex subunit B (264 aa).

A helical membrane pass occupies residues 5-25 (LINSIAVLAGLGFAVGVMLVI). The region spanning 33–92 (DSNPLIDDVASLLPGANCGGCGFAGCAACAEAIVEQGAPVNSCPVGGFEVAKQIGALLGQ) is the 4Fe-4S domain. [4Fe-4S] cluster-binding residues include cysteine 50, cysteine 53, cysteine 58, cysteine 75, cysteine 138, cysteine 142, cysteine 148, cysteine 152, cysteine 172, cysteine 175, cysteine 178, cysteine 182, cysteine 217, cysteine 220, cysteine 223, cysteine 227, cysteine 246, cysteine 249, cysteine 252, and cysteine 256. 4Fe-4S ferredoxin-type domains follow at residues 127-162 (VALMLCDSRKGCTYGCLGLGTCVQACQFGALSMGED), 163-192 (GFPVVNKALCTSCGNCIAACPNGVLTFARD), 207-236 (KDVKAVCEVGCIGCKKCEKECPAGAIRVTE), and 237-264 (FLAEIDQEKCTACGACVAICPQKAIELR).

It belongs to the 4Fe4S bacterial-type ferredoxin family. RnfB subfamily. As to quaternary structure, the Rnf complex is probably composed of eight subunits, including RnfA, RnfB, RnfC, RnfD, RnfE and RnfG. [4Fe-4S] cluster serves as cofactor.

The protein localises to the cell membrane. In terms of biological role, part of a membrane-bound complex that couples electron transfer with translocation of ions across the membrane. Catalyzes Na(+) transport, most probably coupled to electron transfer from reduced ferredoxin to methanophenazine and heterodisulfide reductase. Involved in heterodisulfide reduction during methanogenesis from acetate. This Methanosarcina acetivorans (strain ATCC 35395 / DSM 2834 / JCM 12185 / C2A) protein is Ion-translocating oxidoreductase complex subunit B.